A 429-amino-acid polypeptide reads, in one-letter code: Protein S-Myc (429 aa).

A Phosphotyrosine; by Tyr-kinases modification is found at Tyr-36. A disordered region spans residues 301-325; sequence PLPYAEDARPLKKPRSQDPLGPLKC. One can recognise a bHLH domain in the interval 346 to 398; the sequence is ERRRNHNRMERQRRDIMRSSFLNLRDLVPELVHNEKAAKVVILKKATEYIHTL. Residues 398–419 are leucine-zipper; it reads LQTDESKLLVEREKLYERKQQL.

As to quaternary structure, efficient DNA binding requires dimerization with another bHLH protein.

Its subcellular location is the nucleus. In terms of biological role, has apoptosis-inducing activity. The protein is Protein S-Myc (Mycs) of Rattus norvegicus (Rat).